The sequence spans 203 residues: Fucoxanthin-chlorophyll a-c binding protein, chloroplastic (203 aa).

A chloroplast-targeting transit peptide spans 1 to 30 (MKLAIAALLAGSAAAFAPAQSGKASTALNM).

It belongs to the fucoxanthin chlorophyll protein family. The LHC complex of chromophytic algae is composed of fucoxanthin, chlorophyll A and C bound non-covalently by fucoxanthin chlorophyll proteins (FCPs). The ratio of pigments in this LHC is; fucoxanthin: chlorophyll C: chlorophyll A; (0.6-1): (0.1-0.3): (1).

The protein resides in the plastid. The protein localises to the chloroplast thylakoid membrane. The light-harvesting complex (LHC) functions as a light receptor, it captures and delivers excitation energy to photosystems with which it is closely associated. Energy is transferred from the carotenoid and chlorophyll C (or B) to chlorophyll A and the photosynthetic reaction centers where it is used to synthesize ATP and reducing power. This Trieres chinensis (Marine centric diatom) protein is Fucoxanthin-chlorophyll a-c binding protein, chloroplastic (FCPA).